Reading from the N-terminus, the 756-residue chain is Zinc finger and BTB domain-containing protein 49 (756 aa).

The BTB domain occupies 25 to 91 (CDCMLVVRGV…MYTSRLDLNQ (67 aa)). Disordered stretches follow at residues 176-197 (APSA…GGSC), 226-290 (PSQV…LSEP), and 311-379 (SQQS…PSQA). Positions 226-242 (PSQVPATQQPLTRSAST) are enriched in polar residues. Basic and acidic residues-rich tracts occupy residues 319–341 (SHPE…DAVE) and 348–365 (AEEK…REEE). C2H2-type zinc fingers lie at residues 386 to 408 (YACE…KRSH), 414 to 436 (FECN…LRRH), 442 to 464 (YICE…IIIH), 470 to 492 (HLCD…KKTH), 498 to 520 (FTCD…RVRH), 526 to 548 (YSCP…VRTH), and 554 to 576 (YSCE…KRMH).

It belongs to the krueppel C2H2-type zinc-finger protein family. As to quaternary structure, interacts with EP300, KAT5/Tip60 and ZBTB17. The interaction with EP300 is direct and leads to synergistic induction of CDKN1A. On the CDKN1A promoter, forms a complex with ZBTB17; this interaction leads to additive CDKN1A transactivation. The interaction with ZBTB17 may block ZBTB17 repressor activity. As to expression, widely expressed, with highest levels in white adipose tissue and kidney, intermediate levels in brain, liver and heart, and lowest levels in spleen, brown adipose tissue and muscle.

Its subcellular location is the cytoplasm. The protein resides in the nucleus. In terms of biological role, transcription factor. Inhibits cell proliferation by activating either CDKN1A/p21 transcription or RB1 transcription. In Mus musculus (Mouse), this protein is Zinc finger and BTB domain-containing protein 49 (Zbtb49).